The sequence spans 405 residues: 4-hydroxy-3-methylbut-2-en-1-yl diphosphate synthase (ferredoxin) (405 aa).

[4Fe-4S] cluster is bound by residues C314, C317, C348, and E355.

It belongs to the IspG family. [4Fe-4S] cluster serves as cofactor.

It catalyses the reaction (2E)-4-hydroxy-3-methylbut-2-enyl diphosphate + 2 oxidized [2Fe-2S]-[ferredoxin] + H2O = 2-C-methyl-D-erythritol 2,4-cyclic diphosphate + 2 reduced [2Fe-2S]-[ferredoxin] + H(+). It participates in isoprenoid biosynthesis; isopentenyl diphosphate biosynthesis via DXP pathway; isopentenyl diphosphate from 1-deoxy-D-xylulose 5-phosphate: step 5/6. Its function is as follows. Converts 2C-methyl-D-erythritol 2,4-cyclodiphosphate (ME-2,4cPP) into 1-hydroxy-2-methyl-2-(E)-butenyl 4-diphosphate. The chain is 4-hydroxy-3-methylbut-2-en-1-yl diphosphate synthase (ferredoxin) from Prochlorococcus marinus subsp. pastoris (strain CCMP1986 / NIES-2087 / MED4).